A 304-amino-acid polypeptide reads, in one-letter code: Chromo domain-containing protein cec-1 (304 aa).

In terms of domain architecture, Chromo spans 8–66 (YTVESILEHRKKKGKSEFYIKWLGYDHTHNSWEPKENIVDPTLIEAFFTREAARKAEIK). The segment covering 63 to 73 (AEIKAKKDKMA) has biased composition (basic and acidic residues). 2 disordered regions span residues 63–235 (AEIK…EIQL) and 248–304 (VEPA…AIIE). Residues 75-102 (GKKGASSKASASVSKASASTPARGAKAA) are compositionally biased toward low complexity. Positions 106 to 116 (PPKKSPPKRQR) are enriched in basic residues. Basic and acidic residues predominate over residues 122-141 (IRPDSDTDEEHSSADKKSKA). 3 stretches are compositionally biased toward acidic residues: residues 142–152 (EDEEEVEDDEE), 163–204 (EEPE…DVQL), and 212–233 (EEEE…EEEI). A compositionally biased stretch (low complexity) spans 248-292 (VEPAVATPEPSEPSSSEKAVVENGSSSAAAGNSASKPEVSAVEVV). The span at 293 to 304 (TVEDDDDIAIIE) shows a compositional bias: acidic residues.

It localises to the nucleus. The protein resides in the chromosome. This is Chromo domain-containing protein cec-1 (cec-1) from Caenorhabditis elegans.